The primary structure comprises 160 residues: S-ribosylhomocysteine lyase (160 aa).

3 residues coordinate Fe cation: histidine 57, histidine 61, and cysteine 127.

This sequence belongs to the LuxS family. In terms of assembly, homodimer. The cofactor is Fe cation.

The catalysed reaction is S-(5-deoxy-D-ribos-5-yl)-L-homocysteine = (S)-4,5-dihydroxypentane-2,3-dione + L-homocysteine. In terms of biological role, involved in the synthesis of autoinducer 2 (AI-2) which is secreted by bacteria and is used to communicate both the cell density and the metabolic potential of the environment. The regulation of gene expression in response to changes in cell density is called quorum sensing. Catalyzes the transformation of S-ribosylhomocysteine (RHC) to homocysteine (HC) and 4,5-dihydroxy-2,3-pentadione (DPD). This is S-ribosylhomocysteine lyase from Streptococcus suis (strain 98HAH33).